The chain runs to 293 residues: Protease HtpX (293 aa).

2 helical membrane-spanning segments follow: residues 4-24 and 34-54; these read IALF…VLSL and GLMI…LLMS. Histidine 139 contacts Zn(2+). Glutamate 140 is a catalytic residue. Histidine 143 provides a ligand contact to Zn(2+). A run of 2 helical transmembrane segments spans residues 158 to 178 and 193 to 213; these read IVNT…SGFL and LVYF…ASII. Glutamate 222 is a Zn(2+) binding site.

It belongs to the peptidase M48B family. Zn(2+) serves as cofactor.

Its subcellular location is the cell inner membrane. This Pectobacterium carotovorum subsp. carotovorum (strain PC1) protein is Protease HtpX.